The primary structure comprises 242 residues: Probable septum site-determining protein MinC (242 aa).

This sequence belongs to the MinC family. In terms of assembly, interacts with MinD and FtsZ.

Functionally, cell division inhibitor that blocks the formation of polar Z ring septums. Rapidly oscillates between the poles of the cell to destabilize FtsZ filaments that have formed before they mature into polar Z rings. Prevents FtsZ polymerization. In Brucella anthropi (strain ATCC 49188 / DSM 6882 / CCUG 24695 / JCM 21032 / LMG 3331 / NBRC 15819 / NCTC 12168 / Alc 37) (Ochrobactrum anthropi), this protein is Probable septum site-determining protein MinC.